We begin with the raw amino-acid sequence, 315 residues long: Shiga toxin subunit A (315 aa).

Residues 1–22 (MKIIIFRVLTFFFVIFSVNVVA) form the signal peptide. Positions 23 to 273 (KEFTLDFSTA…CHHHASRVAR (251 aa)) are A1. Glu189 is a catalytic residue. Residues Cys264 and Cys283 are joined by a disulfide bond. An A2 region spans residues 274–315 (MASDEFPSMCPADGRVRGITHNKILWDSSTLGAILMRRTISS).

Belongs to the ribosome-inactivating protein family. As to quaternary structure, shiga toxin contains a single subunit A and five copies of subunit B.

It catalyses the reaction Endohydrolysis of the N-glycosidic bond at one specific adenosine on the 28S rRNA.. Functionally, the A subunit is responsible for inhibiting protein synthesis through the catalytic inactivation of 60S ribosomal subunits. After endocytosis, the A subunit is cleaved by furin in two fragments, A1 and A2: A1 is the catalytically active fragment, and A2 is essential for holotoxin assembly with the B subunits. The chain is Shiga toxin subunit A (stxA) from Shigella sonnei (Shigella sonnei bacteriophage 7888).